The chain runs to 501 residues: Glucose-6-phosphate isomerase (501 aa).

Residues 78 to 101 (GIANPTENRAAEHSAERGDGAPES) form a disordered region. Residues 86–97 (RAAEHSAERGDG) show a composition bias toward basic and acidic residues. Glu-333 functions as the Proton donor in the catalytic mechanism. Residues His-364 and Lys-474 contribute to the active site.

The protein belongs to the GPI family.

The protein localises to the cytoplasm. The enzyme catalyses alpha-D-glucose 6-phosphate = beta-D-fructose 6-phosphate. It functions in the pathway carbohydrate biosynthesis; gluconeogenesis. It participates in carbohydrate degradation; glycolysis; D-glyceraldehyde 3-phosphate and glycerone phosphate from D-glucose: step 2/4. In terms of biological role, catalyzes the reversible isomerization of glucose-6-phosphate to fructose-6-phosphate. This is Glucose-6-phosphate isomerase from Sphingopyxis alaskensis (strain DSM 13593 / LMG 18877 / RB2256) (Sphingomonas alaskensis).